The chain runs to 526 residues: Delayed-rectifier potassium channel regulatory subunit KCNS1 (526 aa).

At 1-217 (MLMLLVRGTH…LTMENPGYSL (217 aa)) the chain is on the cytoplasmic side. The chain crosses the membrane as a helical span at residues 218–239 (PSKLFSCVSISVVLASIAAMCI). At 240-270 (HSLPEYQAREAAAAVAAVAAGRSPEGVRDDP) the chain is on the extracellular side. Residues 271–293 (VLRRLEYFCIAWFSFEVSSRLLL) form a helical membrane-spanning segment. The Cytoplasmic portion of the chain corresponds to 294–304 (APSTRNFFCHP). A helical transmembrane segment spans residues 305-322 (LNLIDIVSVLPFYLTLLA). Residues 323–337 (GVALGDQGGKEFGHL) lie on the Extracellular side of the membrane. Residues 338–358 (GKVVQVFRLMRIFRVLKLARH) traverse the membrane as a helical; Voltage-sensor segment. Residues 359 to 373 (STGLRSLGATLKHSY) are Cytoplasmic-facing. The helical transmembrane segment at 374–395 (REVGILLLYLAVGVSVFSGVAY) threads the bilayer. Residues 396-408 (TAEKEEDVGFNTI) are Extracellular-facing. Positions 409-420 (PACWWWGTVSMT) form an intramembrane region, helical. Residues 421 to 426 (TVGYGD) carry the Selectivity filter motif. Residues 421-428 (TVGYGDVV) lie within the membrane without spanning it. Residues 429–435 (PVTVAGK) are Extracellular-facing. The helical transmembrane segment at 436–464 (LAASGCILGGILVVALPITIIFNKFSHFY) threads the bilayer. Topologically, residues 465-526 (RRQKALEAAV…PSEPPHPQMY (62 aa)) are cytoplasmic. The segment at 491 to 526 (GVSEASLETSRETSQEGRSADLESQAPSEPPHPQMY) is disordered. Basic and acidic residues predominate over residues 499–511 (TSRETSQEGRSAD).

It belongs to the potassium channel family. S (TC 1.A.1.2) subfamily. Kv9.1/KCNS1 sub-subfamily. In terms of assembly, heterotetramer with KCNB1. Heterotetramer with KCNB2. Does not form homomultimers.

It localises to the cell membrane. Functionally, potassium channel regulatory subunit that modulate the delayed rectifier voltage-gated potassium channel activity of KCNB1 and KCNB2 by altering their kinetics, expression levels, and shifting the half-inactivation potential to more polarized values. While it does not form functional channels on its own, it can form functional heterotetrameric channels with KCNB1 and KCNB2. Each regulatory subunit has unique regulatory properties that can lead to extensive inhibition, significant changes in kinetics, and/or substantial shifts in the voltage dependencies of the inactivation process. The sequence is that of Delayed-rectifier potassium channel regulatory subunit KCNS1 from Pongo abelii (Sumatran orangutan).